The sequence spans 251 residues: Imidazole glycerol phosphate synthase subunit HisF (251 aa).

Catalysis depends on residues Asp11 and Asp130.

The protein belongs to the HisA/HisF family. As to quaternary structure, heterodimer of HisH and HisF.

Its subcellular location is the cytoplasm. The catalysed reaction is 5-[(5-phospho-1-deoxy-D-ribulos-1-ylimino)methylamino]-1-(5-phospho-beta-D-ribosyl)imidazole-4-carboxamide + L-glutamine = D-erythro-1-(imidazol-4-yl)glycerol 3-phosphate + 5-amino-1-(5-phospho-beta-D-ribosyl)imidazole-4-carboxamide + L-glutamate + H(+). The protein operates within amino-acid biosynthesis; L-histidine biosynthesis; L-histidine from 5-phospho-alpha-D-ribose 1-diphosphate: step 5/9. Functionally, IGPS catalyzes the conversion of PRFAR and glutamine to IGP, AICAR and glutamate. The HisF subunit catalyzes the cyclization activity that produces IGP and AICAR from PRFAR using the ammonia provided by the HisH subunit. The protein is Imidazole glycerol phosphate synthase subunit HisF of Bacteroides thetaiotaomicron (strain ATCC 29148 / DSM 2079 / JCM 5827 / CCUG 10774 / NCTC 10582 / VPI-5482 / E50).